The primary structure comprises 671 residues: cGMP-dependent protein kinase 1 (671 aa).

The residue at position 2 (Ser-2) is an N-acetylserine. Positions 2 to 59 (SELEEDFAKILMLKEERIKELEKRLSEKEEEIQELKRKLHKCQSVLPVPSTHIGPRTT) form a coiled coil. Residues 2–102 (SELEEDFAKI…LIKEAILDND (101 aa)) form a required for dimerization region. The segment at 9–44 (AKILMLKEERIKELEKRLSEKEEEIQELKRKLHKCQ) is leucine-zipper. Residues 50–75 (PSTHIGPRTTRAQGISAEPQTYRSFH) are autoinhibitory domain. Thr-59 is subject to Phosphothreonine; by autocatalysis. The tract at residues 103 to 220 (FMKNLELSQI…EYMEFLKSVP (118 aa)) is cGMP-binding, high affinity. 3',5'-cyclic GMP-binding positions include 167-170 (GELA), 177-178 (RT), Arg-282, 291-294 (GEKA), 301-302 (RT), and Tyr-336. The interval 221-341 (TFQSLPEEIL…SNKAYEDAEA (121 aa)) is cGMP-binding, low affinity. The region spanning 360-619 (FNIIDTLGVG…VKDIQKHKWF (260 aa)) is the Protein kinase domain. ATP is bound by residues 366-374 (LGVGGFGRV) and Lys-390. Asp-484 acts as the Proton acceptor in catalysis. A Phosphothreonine modification is found at Thr-515. Residues 620–671 (EGFNWEGLRKGTLTPPIIPSVASPTDTSNFDGFPEDNDEPPPDDNSGWDIDF) form the AGC-kinase C-terminal domain. The segment at 635–671 (PIIPSVASPTDTSNFDGFPEDNDEPPPDDNSGWDIDF) is disordered. Positions 652–661 (FPEDNDEPPP) are enriched in acidic residues.

It belongs to the protein kinase superfamily. AGC Ser/Thr protein kinase family. cGMP subfamily. Isoform alpha: parallel homodimer or heterodimer and also heterotetramer. Interacts directly with PPP1R12A. Non-covalent dimer of dimer of PRKG1-PRKG1 and PPP1R12A-PPP1R12A. This interaction targets PRKG1 to stress fibers to mediate smooth muscle cell relaxation and vasodilation in responses to rises in cGMP. Isoform beta: antiparallel homodimer. Part of cGMP kinase signaling complex at least composed of ACTA2/alpha-actin, CNN1/calponin H1, PLN/phospholamban, PRKG1 and ITPR1. Interacts with IRAG1. Forms a stable complex with ITPR1, IRAG1, and isoform beta of PRKG1. Interacts with TRPC7 (via ankyrin repeat domain). Isoform alpha interacts with RGS2. Interacts with GTF2I. Post-translationally, autophosphorylation increases kinase activity. 65 kDa monomer is produced by proteolytic cleavage.

The protein localises to the cytoplasm. It carries out the reaction L-seryl-[protein] + ATP = O-phospho-L-seryl-[protein] + ADP + H(+). The catalysed reaction is L-threonyl-[protein] + ATP = O-phospho-L-threonyl-[protein] + ADP + H(+). Its activity is regulated as follows. In the absence of cGMP, PRKG1 activity is suppressed by autoinhibitory contacts. Functionally, serine/threonine protein kinase that acts as a key mediator of the nitric oxide (NO)/cGMP signaling pathway. GMP binding activates PRKG1, which phosphorylates serines and threonines on many cellular proteins. Numerous protein targets for PRKG1 phosphorylation are implicated in modulating cellular calcium, but the contribution of each of these targets may vary substantially among cell types. Proteins that are phosphorylated by PRKG1 regulate platelet activation and adhesion, smooth muscle contraction, cardiac function, gene expression, feedback of the NO-signaling pathway, and other processes involved in several aspects of the CNS like axon guidance, hippocampal and cerebellar learning, circadian rhythm and nociception. Smooth muscle relaxation is mediated through lowering of intracellular free calcium, by desensitization of contractile proteins to calcium, and by decrease in the contractile state of smooth muscle or in platelet activation. Regulates intracellular calcium levels via several pathways: phosphorylates IRAG1 and inhibits IP3-induced Ca(2+) release from intracellular stores, phosphorylation of KCNMA1 (BKCa) channels decreases intracellular Ca(2+) levels, which leads to increased opening of this channel. PRKG1 phosphorylates the canonical transient receptor potential channel (TRPC) family which inactivates the associated inward calcium current. Another mode of action of NO/cGMP/PKGI signaling involves PKGI-mediated inactivation of the Ras homolog gene family member A (RhoA). Phosphorylation of RHOA by PRKG1 blocks the action of this protein in myriad processes: regulation of RHOA translocation; decreasing contraction; controlling vesicle trafficking, reduction of myosin light chain phosphorylation resulting in vasorelaxation. Activation of PRKG1 by NO signaling also alters gene expression in a number of tissues. In smooth muscle cells, increased cGMP and PRKG1 activity influence expression of smooth muscle-specific contractile proteins, levels of proteins in the NO/cGMP signaling pathway, down-regulation of the matrix proteins osteopontin and thrombospondin-1 to limit smooth muscle cell migration and phenotype. Regulates vasodilator-stimulated phosphoprotein (VASP) functions in platelets and smooth muscle. This Oryctolagus cuniculus (Rabbit) protein is cGMP-dependent protein kinase 1 (PRKG1).